The primary structure comprises 33 residues: Ice-structuring protein GS-5 (33 aa).

M1 carries the post-translational modification Blocked amino end (Met).

It belongs to the type-I AFP family.

Antifreeze proteins lower the blood freezing point. The polypeptide is Ice-structuring protein GS-5 (Myoxocephalus aenaeus (Grubby sculpin)).